A 120-amino-acid polypeptide reads, in one-letter code: Large ribosomal subunit protein bL17 (120 aa).

The protein belongs to the bacterial ribosomal protein bL17 family. As to quaternary structure, part of the 50S ribosomal subunit. Contacts protein L32.

The protein is Large ribosomal subunit protein bL17 of Geobacillus thermodenitrificans (strain NG80-2).